Consider the following 99-residue polypeptide: Goannatyrotoxin-Vere1 (99 aa).

The signal sequence occupies residues methionine 1–alanine 28. Tyrosine 64 is subject to Tyrosine amide. A propeptide spans serine 68–tryptophan 99 (C-terminal extension).

The protein belongs to the NPY family. Expressed by the mandibular venom gland.

The protein localises to the secreted. Its function is as follows. Shows a potent unique triphasic action, rapid biphasic hypertension followed by prolonged hypotension. The polypeptide is Goannatyrotoxin-Vere1 (Varanus eremius (Rusty desert monitor)).